We begin with the raw amino-acid sequence, 358 residues long: MQEWFQNLFAATLGLGDLGITVGLVVSVIVKIVIILIPLILTVAYLTYFERKVIGFMQLRVGPNVTGPWGLIQPFADVFKLLFKEVTRPRLSNKALFYIGPIMSLAPSFAAWAVIPFNEEWVLTNINIGLLYILMITSLSVYGVIIAGWASNSKYSFLGAMRASAQSISYEIAMSAALVCVVMVSGSMNFSDIVAAQAKGIAGGSVFSWNWLPLFPIFIVYLISAVAETNRAPFDVAEGESEIVAGHHVEYSGFAFALFFLAEYIFMILISALTSLMFLGGWLSPFPQSWGFIGTPSAFWMFVKMAAVLYWYLWIRATFPRYRYDQIMRLGWKVLIPIGFAYIVILGLWMISPLNLWK.

A run of 8 helical transmembrane segments spans residues 20 to 40, 95 to 115, 128 to 148, 168 to 188, 206 to 226, 253 to 273, 290 to 310, and 334 to 354; these read ITVGLVVSVIVKIVIILIPLI, ALFYIGPIMSLAPSFAAWAVI, IGLLYILMITSLSVYGVIIAG, ISYEIAMSAALVCVVMVSGSM, VFSWNWLPLFPIFIVYLISAV, GFAFALFFLAEYIFMILISAL, WGFIGTPSAFWMFVKMAAVLY, and VLIPIGFAYIVILGLWMISPL.

Belongs to the complex I subunit 1 family. NDH-1 is composed of 14 different subunits. Subunits NuoA, H, J, K, L, M, N constitute the membrane sector of the complex.

Its subcellular location is the cell inner membrane. The enzyme catalyses a quinone + NADH + 5 H(+)(in) = a quinol + NAD(+) + 4 H(+)(out). In terms of biological role, NDH-1 shuttles electrons from NADH, via FMN and iron-sulfur (Fe-S) centers, to quinones in the respiratory chain. The immediate electron acceptor for the enzyme in this species is believed to be ubiquinone. Couples the redox reaction to proton translocation (for every two electrons transferred, four hydrogen ions are translocated across the cytoplasmic membrane), and thus conserves the redox energy in a proton gradient. This subunit may bind ubiquinone. This is NADH-quinone oxidoreductase subunit H from Neisseria meningitidis serogroup A / serotype 4A (strain DSM 15465 / Z2491).